The following is a 308-amino-acid chain: Aspartate carbamoyltransferase catalytic subunit (308 aa).

Residues Arg-59 and Thr-60 each coordinate carbamoyl phosphate. Lys-87 contacts L-aspartate. 3 residues coordinate carbamoyl phosphate: Arg-109, His-137, and Gln-140. Residues Arg-170 and Arg-224 each coordinate L-aspartate. Carbamoyl phosphate-binding residues include Gly-265 and Pro-266.

Belongs to the aspartate/ornithine carbamoyltransferase superfamily. ATCase family. As to quaternary structure, heterododecamer (2C3:3R2) of six catalytic PyrB chains organized as two trimers (C3), and six regulatory PyrI chains organized as three dimers (R2).

It catalyses the reaction carbamoyl phosphate + L-aspartate = N-carbamoyl-L-aspartate + phosphate + H(+). It functions in the pathway pyrimidine metabolism; UMP biosynthesis via de novo pathway; (S)-dihydroorotate from bicarbonate: step 2/3. In terms of biological role, catalyzes the condensation of carbamoyl phosphate and aspartate to form carbamoyl aspartate and inorganic phosphate, the committed step in the de novo pyrimidine nucleotide biosynthesis pathway. The sequence is that of Aspartate carbamoyltransferase catalytic subunit from Flavobacterium psychrophilum (strain ATCC 49511 / DSM 21280 / CIP 103535 / JIP02/86).